Here is a 559-residue protein sequence, read N- to C-terminus: AP-4 complex accessory subunit tepsin (559 aa).

In terms of domain architecture, ENTH spans 2–135; that stretch reads LDRLAFLQQL…FSESIPSPSH (134 aa). Disordered stretches follow at residues 131 to 157, 214 to 290, and 472 to 491; these read PSPS…APAL, AIPS…ESLD, and PNGA…SDPA. 2 stretches are compositionally biased toward low complexity: residues 144-154 and 266-281; these read QSGMGSQASSA and SRSS…DGQS. Positions 472-485 are enriched in polar residues; that stretch reads PNGAANQKNPNGST.

The protein localises to the golgi apparatus. The protein resides in the trans-Golgi network membrane. Its subcellular location is the cytoplasmic vesicle. It localises to the cytoplasm. It is found in the cytosol. May play a role in vesicular trafficking of proteins at the trans-Golgi network. This chain is AP-4 complex accessory subunit tepsin, found in Xenopus laevis (African clawed frog).